A 310-amino-acid chain; its full sequence is Protein FIP2 (310 aa).

The segment at 1 to 58 is disordered; that stretch reads MGFAPVTPAAVETYDPDVDHDDESNGLDGFRVRSKRSGKFSGGYSDSPREVGDGYGVR. A compositionally biased stretch (acidic residues) spans 14 to 25; sequence YDPDVDHDDESN. A phosphoserine mark is found at Ser77 and Ser105. Disordered regions lie at residues 115-135, 152-171, and 177-221; these read ATRL…GSGG, FKPK…LDYD, and DRAE…GSSS. Over residues 208–221 the composition is skewed to polar residues; that stretch reads PRNTGASNGYGSSS.

In terms of assembly, interacts with FRI. Interacts with WAV3.

The polypeptide is Protein FIP2 (Arabidopsis thaliana (Mouse-ear cress)).